The following is a 459-amino-acid chain: Lipase 4 (459 aa).

An N-terminal signal peptide occupies residues 1-14 (MLFLLFLLVAPIYA). Cys110 and Cys281 are disulfide-bonded. The active-site Charge relay system is the Ser194. 2 N-linked (GlcNAc...) asparagine glycosylation sites follow: Asn229 and Asn266. Active-site charge relay system residues include Asp343 and His376. Residues Cys359 and Cys404 are joined by a disulfide bond.

It belongs to the AB hydrolase superfamily. Lipase family. Class Lip subfamily.

Its subcellular location is the secreted. It catalyses the reaction a triacylglycerol + H2O = a diacylglycerol + a fatty acid + H(+). Functionally, secreted lipase that is able to hydrolyze both the neutral triacylglycerols and the monopalmitate ester Tween 40, allowing the use of hydrolyzed products as carbon sources. Has broad lipolytic activity, which may be important for colonization and subsequent infection, therefore contributing to the persistence and virulence in human tissue. This Candida albicans (strain SC5314 / ATCC MYA-2876) (Yeast) protein is Lipase 4.